The primary structure comprises 71 residues: Cell division protein ZapB (71 aa).

A coiled-coil region spans residues 5-67; sequence LEVLEQLESK…RALLGKMEQM (63 aa).

This sequence belongs to the ZapB family. As to quaternary structure, homodimer. The ends of the coiled-coil dimer bind to each other, forming polymers. Interacts with FtsZ.

The protein localises to the cytoplasm. In terms of biological role, non-essential, abundant cell division factor that is required for proper Z-ring formation. It is recruited early to the divisome by direct interaction with FtsZ, stimulating Z-ring assembly and thereby promoting cell division earlier in the cell cycle. Its recruitment to the Z-ring requires functional FtsA or ZipA. The sequence is that of Cell division protein ZapB from Aeromonas salmonicida (strain A449).